Consider the following 985-residue polypeptide: Alanine--tRNA ligase, mitochondrial (985 aa).

The transit peptide at 1–23 (MAASVAAAARRLRRAIRRSPAWR) directs the protein to the mitochondrion. ATP is bound by residues arginine 110, histidine 128, tryptophan 210, and 240 to 242 (LWN). L-alanine contacts are provided by asparagine 242 and aspartate 265. An ATP-binding site is contributed by glycine 269. 4 residues coordinate Zn(2+): histidine 632, histidine 636, cysteine 749, and histidine 753.

It belongs to the class-II aminoacyl-tRNA synthetase family. As to quaternary structure, monomer. The cofactor is Zn(2+).

The protein resides in the mitochondrion. The enzyme catalyses tRNA(Ala) + L-alanine + ATP = L-alanyl-tRNA(Ala) + AMP + diphosphate. The catalysed reaction is (S)-lactate + ATP + H(+) = (S)-lactoyl-AMP + diphosphate. It carries out the reaction (S)-lactoyl-AMP + L-lysyl-[protein] = N(6)-[(S)-lactoyl]-L-lysyl-[protein] + AMP + 2 H(+). Functionally, catalyzes the attachment of alanine to tRNA(Ala) in a two-step reaction: alanine is first activated by ATP to form Ala-AMP and then transferred to the acceptor end of tRNA(Ala). Also edits incorrectly charged tRNA(Ala) via its editing domain. In presence of high levels of lactate, also acts as a protein lactyltransferase that mediates lactylation of lysine residues in target proteins, such as CGAS. Acts as an inhibitor of cGAS/STING signaling by catalyzing lactylation of CGAS, preventing the formation of liquid-like droplets in which CGAS is activated. This chain is Alanine--tRNA ligase, mitochondrial, found in Homo sapiens (Human).